Consider the following 433-residue polypeptide: Tol-Pal system protein TolB (433 aa).

The N-terminal stretch at 1-26 is a signal peptide; the sequence is MNKLRLFRSFFAFLLPFGMATGAAHG.

It belongs to the TolB family. The Tol-Pal system is composed of five core proteins: the inner membrane proteins TolA, TolQ and TolR, the periplasmic protein TolB and the outer membrane protein Pal. They form a network linking the inner and outer membranes and the peptidoglycan layer.

Its subcellular location is the periplasm. Its function is as follows. Part of the Tol-Pal system, which plays a role in outer membrane invagination during cell division and is important for maintaining outer membrane integrity. This is Tol-Pal system protein TolB from Methylobacillus flagellatus (strain ATCC 51484 / DSM 6875 / VKM B-1610 / KT).